The sequence spans 248 residues: Polyhedrin (248 aa).

An N-terminal signal peptide occupies residues 1–27 (MADVAGTSNRDFRGREQRLFNSEQYNY). N-linked (GlcNAc...) asparagine; by host glycans are attached at residues N28, N77, N86, and N237.

It is found in the host cytoplasm. Its function is as follows. Major component of the virus occlusion bodies, which are large proteinaceous structures (polyhedra), that protect the virus from the outside environment for extended periods until they are ingested by insect larvae. This Bombyx mori cytoplasmic polyhedrosis virus (BmCPV) protein is Polyhedrin.